The chain runs to 865 residues: Xylosyltransferase 2 (865 aa).

The Cytoplasmic portion of the chain corresponds to 1–15; the sequence is MVASARVQKLVRRYK. A helical; Signal-anchor for type II membrane protein transmembrane segment spans residues 16 to 36; it reads LAIATALAILLLQGLVVWSFS. Residues 37-865 are Lumenal-facing; the sequence is GLEEDEAGEK…GPVKADGRLR (829 aa). The interval 41–157 is disordered; that stretch reads DEAGEKGRQR…EGAPQPTDNG (117 aa). Residues 53 to 65 are compositionally biased toward basic and acidic residues; sequence RPLDPGEGSKDTD. Basic residues predominate over residues 73–82; the sequence is STGRRHGRWR. The N-linked (GlcNAc...) asparagine glycan is linked to N122. Positions 125 to 137 are enriched in low complexity; it reads GAAAGEALVGAAG. Intrachain disulfides connect C162–C190, C206–C448, C467–C480, and C469–C478. Residues V239, D267, and 296–298 contribute to the UDP-alpha-D-xylose site; that span reads TIW. N327 carries N-linked (GlcNAc...) asparagine glycosylation. 400 to 401 contacts UDP-alpha-D-xylose; sequence DW. UDP-alpha-D-xylose contacts are provided by residues S481 and 504–505; that span reads RK. 2 disulfide bridges follow: C581–C833 and C826–C839. Residue N683 is glycosylated (N-linked (GlcNAc...) asparagine). Positions 846-865 are disordered; sequence SLSPDPKSELGPVKADGRLR.

It belongs to the glycosyltransferase 14 family. XylT subfamily. As to quaternary structure, monomer. Mg(2+) serves as cofactor. It depends on Mn(2+) as a cofactor. Contains disulfide bonds. As to expression, widely expressed. Expressed at higher level in kidney and pancreas.

Its subcellular location is the golgi apparatus membrane. It is found in the secreted. It catalyses the reaction UDP-alpha-D-xylose + L-seryl-[protein] = 3-O-(beta-D-xylosyl)-L-seryl-[protein] + UDP + H(+). Its pathway is glycan metabolism; chondroitin sulfate biosynthesis. It functions in the pathway glycan metabolism; heparan sulfate biosynthesis. Catalyzes the first step in the biosynthesis of chondroitin sulfate, heparan sulfate and dermatan sulfate proteoglycans, such as DCN. Transfers D-xylose from UDP-D-xylose to specific serine residues of the core protein. This is Xylosyltransferase 2 (XYLT2) from Homo sapiens (Human).